The sequence spans 177 residues: Large ribosomal subunit protein uL6 (177 aa).

The protein belongs to the universal ribosomal protein uL6 family. In terms of assembly, part of the 50S ribosomal subunit.

Its function is as follows. This protein binds to the 23S rRNA, and is important in its secondary structure. It is located near the subunit interface in the base of the L7/L12 stalk, and near the tRNA binding site of the peptidyltransferase center. The polypeptide is Large ribosomal subunit protein uL6 (Methylorubrum extorquens (strain CM4 / NCIMB 13688) (Methylobacterium extorquens)).